Here is a 102-residue protein sequence, read N- to C-terminus: Small ribosomal subunit protein uS10 (102 aa).

The protein belongs to the universal ribosomal protein uS10 family. Part of the 30S ribosomal subunit.

Involved in the binding of tRNA to the ribosomes. This chain is Small ribosomal subunit protein uS10, found in Streptococcus thermophilus (strain ATCC BAA-250 / LMG 18311).